The following is a 390-amino-acid chain: Aspartate carbamoyltransferase, chloroplastic (390 aa).

Residues 1–68 (MSIASSLTSA…NLTRNVGPVR (68 aa)) constitute a chloroplast transit peptide. Residues Arg-136 and Thr-137 each contribute to the carbamoyl phosphate site. Positions 136 and 137 each coordinate UMP. Lys-166 is an L-aspartate binding site. Residues Arg-187, His-215, and Gln-218 each coordinate carbamoyl phosphate. UMP-binding residues include Arg-187 and His-215. Arg-248 and Arg-310 together coordinate UMP. The L-aspartate site is built by Arg-248 and Arg-310. Carbamoyl phosphate contacts are provided by Leu-350 and Pro-351.

This sequence belongs to the aspartate/ornithine carbamoyltransferase superfamily. ATCase family. Homotrimer.

The protein resides in the plastid. It localises to the chloroplast. It carries out the reaction carbamoyl phosphate + L-aspartate = N-carbamoyl-L-aspartate + phosphate + H(+). The protein operates within pyrimidine metabolism; UMP biosynthesis via de novo pathway; (S)-dihydroorotate from bicarbonate: step 2/3. With respect to regulation, feedback inhibited by UMP. Its function is as follows. Catalyzes the condensation of carbamoyl phosphate and aspartate to form carbamoyl aspartate and inorganic phosphate, the committed step in the de novo pyrimidine nucleotide biosynthesis pathway. The polypeptide is Aspartate carbamoyltransferase, chloroplastic (PYRB) (Arabidopsis thaliana (Mouse-ear cress)).